A 75-amino-acid chain; its full sequence is Putative defensin-like protein 55 (75 aa).

The first 19 residues, 1-19 (MNITKAYVIFFLVVILTNS), serve as a signal peptide directing secretion. 4 cysteine pairs are disulfide-bonded: cysteine 39–cysteine 73, cysteine 43–cysteine 66, cysteine 52–cysteine 71, and cysteine 56–cysteine 72.

The protein belongs to the DEFL family.

It localises to the secreted. The protein is Putative defensin-like protein 55 of Arabidopsis thaliana (Mouse-ear cress).